A 968-amino-acid polypeptide reads, in one-letter code: Translation initiation factor IF-2 (968 aa).

A compositionally biased stretch (low complexity) spans 51–76 (PAAGASKSEAPAAAPKAPASPAATRP). Positions 51–369 (PAAGASKSEA…GVSVPRGDGN (319 aa)) are disordered. Residues 77 to 87 (APAPGPAAPKA) show a composition bias toward pro residues. Over residues 93 to 102 (EAPAAASAPS) the composition is skewed to low complexity. Positions 103 to 112 (APAPAAPAPA) are enriched in pro residues. Low complexity-rich tracts occupy residues 113 to 122 (APAAAASAPS), 128 to 170 (APST…GNNP), and 239 to 254 (GARP…PGAR). Residues 281–336 (GRPGGGGRGPGRPGGAPGTGGAPGAGGGAPAGGGFGKGGRGRGGTQGAFGKGGAGR) show a composition bias toward gly residues. The segment covering 337-346 (GKQRKSKRAK) has biased composition (basic residues). Residues 461–632 (ARPPVVTVMG…AVLLTADAAL (172 aa)) form the tr-type G domain. The G1 stretch occupies residues 470–477 (GHVDHGKT). 470–477 (GHVDHGKT) provides a ligand contact to GTP. The G2 stretch occupies residues 495-499 (GITQH). Residues 520 to 523 (DTPG) form a G3 region. Residues 520-524 (DTPGH) and 574-577 (NKID) contribute to the GTP site. The segment at 574-577 (NKID) is G4. A G5 region spans residues 610-612 (SAR).

This sequence belongs to the TRAFAC class translation factor GTPase superfamily. Classic translation factor GTPase family. IF-2 subfamily.

The protein localises to the cytoplasm. In terms of biological role, one of the essential components for the initiation of protein synthesis. Protects formylmethionyl-tRNA from spontaneous hydrolysis and promotes its binding to the 30S ribosomal subunits. Also involved in the hydrolysis of GTP during the formation of the 70S ribosomal complex. The sequence is that of Translation initiation factor IF-2 from Arthrobacter sp. (strain FB24).